Here is a 384-residue protein sequence, read N- to C-terminus: MSWQDKINAALDARRAADALRRRYPVAQGAGRWLVADDRQYLNFSSNDYLGLSHHPQIIRAWKQSAEQFGVGSGGSGHVSGYSVAHQALEEELAEWLGYSRALLFISGFAANQAVIAAMMAKEDRIVADRLSHASLLEAASLSPSQLRRFVHNDVTHLARLLASPCPGQQMVVTEGVFSMDGDSAPLAEIQQVTQQHNGWLMVDDAHGTGVIGEQGRGSCWLQKVKPELLVVTFGKGFGVSGAAVLCSSTVADYLLQFARHLIYSTSMPPAQAQALRASLAVIRSDEGDARREKLAALITRFRAGVQDLPFTLADSCSAIQPLIVGDNSRALQLAEKLRQQGCWVTAIRPPTVPAGTARLRLTLTAAHEMQDIDRLLEVLHGNG.

R21 is a binding site for substrate. Residue 108–109 (GF) coordinates pyridoxal 5'-phosphate. Position 133 (H133) interacts with substrate. Residues S179, H207, and T233 each coordinate pyridoxal 5'-phosphate. Position 236 is an N6-(pyridoxal phosphate)lysine (K236). T352 contributes to the substrate binding site.

It belongs to the class-II pyridoxal-phosphate-dependent aminotransferase family. BioF subfamily. In terms of assembly, homodimer. The cofactor is pyridoxal 5'-phosphate.

It catalyses the reaction 6-carboxyhexanoyl-[ACP] + L-alanine + H(+) = (8S)-8-amino-7-oxononanoate + holo-[ACP] + CO2. Its pathway is cofactor biosynthesis; biotin biosynthesis. Catalyzes the decarboxylative condensation of pimeloyl-[acyl-carrier protein] and L-alanine to produce 8-amino-7-oxononanoate (AON), [acyl-carrier protein], and carbon dioxide. The protein is 8-amino-7-oxononanoate synthase of Escherichia coli O9:H4 (strain HS).